We begin with the raw amino-acid sequence, 87 residues long: Costars family protein (87 aa).

The protein belongs to the costars family.

The polypeptide is Costars family protein (Oryza sativa subsp. indica (Rice)).